We begin with the raw amino-acid sequence, 423 residues long: Serine hydroxymethyltransferase (423 aa).

Residues Leu-120 and 124–126 (GHL) each bind (6S)-5,6,7,8-tetrahydrofolate. Position 229 is an N6-(pyridoxal phosphate)lysine (Lys-229). 353–355 (SPF) serves as a coordination point for (6S)-5,6,7,8-tetrahydrofolate.

The protein belongs to the SHMT family. As to quaternary structure, homodimer. Requires pyridoxal 5'-phosphate as cofactor.

It localises to the cytoplasm. The catalysed reaction is (6R)-5,10-methylene-5,6,7,8-tetrahydrofolate + glycine + H2O = (6S)-5,6,7,8-tetrahydrofolate + L-serine. It participates in one-carbon metabolism; tetrahydrofolate interconversion. Its pathway is amino-acid biosynthesis; glycine biosynthesis; glycine from L-serine: step 1/1. Functionally, catalyzes the reversible interconversion of serine and glycine with tetrahydrofolate (THF) serving as the one-carbon carrier. This reaction serves as the major source of one-carbon groups required for the biosynthesis of purines, thymidylate, methionine, and other important biomolecules. Also exhibits THF-independent aldolase activity toward beta-hydroxyamino acids, producing glycine and aldehydes, via a retro-aldol mechanism. The polypeptide is Serine hydroxymethyltransferase (Prochlorococcus marinus (strain MIT 9515)).